A 1331-amino-acid polypeptide reads, in one-letter code: Mitogen-activated protein kinase kinase kinase 15 (1331 aa).

Residues 1–13 are compositionally biased toward gly residues; sequence MEGGGGSGGGGGP. The segment at 1-61 is disordered; sequence MEGGGGSGGG…GEAEGGRGPR (61 aa). The region spanning 656 to 912 is the Protein kinase domain; the sequence is NGERVVLGKG…AADLLQEGFL (257 aa). ATP is bound by residues 662-670 and lysine 685; that span reads LGKGSYGIV. The active-site Proton acceptor is the aspartate 777. Disordered regions lie at residues 934–964 and 983–1005; these read GTGTLALPSSGELVGSSSSEHGSISPDSDAQ and LSVPDESPALDDRSTALPPEERD. Over residues 940–962 the composition is skewed to low complexity; the sequence is LPSSGELVGSSSSEHGSISPDSD. Residues 992–1005 are compositionally biased toward basic and acidic residues; sequence LDDRSTALPPEERD. Residues 1216 to 1236 are a coiled coil; the sequence is LVQKEREYQNLLRLILDQKTQ.

It belongs to the protein kinase superfamily. STE Ser/Thr protein kinase family. MAP kinase kinase kinase subfamily. It depends on Mg(2+) as a cofactor.

It catalyses the reaction L-seryl-[protein] + ATP = O-phospho-L-seryl-[protein] + ADP + H(+). The catalysed reaction is L-threonyl-[protein] + ATP = O-phospho-L-threonyl-[protein] + ADP + H(+). With respect to regulation, contains an N-terminal autoinhibitory domain. Activated by phosphorylation at Thr-816, inhibited by phosphorylation at Ser-928. In terms of biological role, serine/threonine kinase which acts as a component of the MAP kinase signal transduction pathway. Once activated, acts as an upstream activator of the p38 MAPK signal transduction cascade through the phosphorylation and activation of several MAP kinase kinases. May function in a signal transduction pathway that is activated by various cell stresses and leads to apoptosis. Involved in phosphorylation of WNK4 in response to osmotic stress or hypotonic low-chloride stimulation via the p38 MAPK signal transduction cascade. This is Mitogen-activated protein kinase kinase kinase 15 from Mus musculus (Mouse).